Here is an 899-residue protein sequence, read N- to C-terminus: Origin recognition complex subunit 5 (899 aa).

Disordered regions lie at residues 27 to 47 (FSSPKKSRKESPIFVQNNDDT), 100 to 166 (DRIN…EYKD), and 194 to 238 (KNLE…DGNL). The segment covering 105-160 (SEEETNINDDNNDDNNGDYDDDNNSDDDDDNDDNNNNDDNNNDDDEDVDDFEDIKE) has biased composition (acidic residues). A compositionally biased stretch (low complexity) spans 207-218 (SSDNSMTSSSEE). Positions 227–237 (ESDKESDKDGN) are enriched in basic and acidic residues. Position 303–310 (303–310 (GLPGMGKT)) interacts with ATP. The segment at 409 to 469 (KRTTENIRSP…NNNSNNVRFN (61 aa)) is disordered. Over residues 455-469 (KNNFNNNNSNNVRFN) the composition is skewed to low complexity.

This sequence belongs to the ORC5 family. As to quaternary structure, component of the origin recognition complex (ORC). Interacts with PCNA1; the interaction occurs during the trophozoite stage but not at the late schizont stage.

Its subcellular location is the nucleus. It catalyses the reaction ATP + H2O = ADP + phosphate + H(+). In terms of biological role, component of the origin recognition complex (ORC) that binds origins of replication. The protein is Origin recognition complex subunit 5 of Plasmodium falciparum (isolate 3D7).